The primary structure comprises 100 residues: Urease subunit gamma (100 aa).

It belongs to the urease gamma subunit family. In terms of assembly, heterotrimer of UreA (gamma), UreB (beta) and UreC (alpha) subunits. Three heterotrimers associate to form the active enzyme.

Its subcellular location is the cytoplasm. It catalyses the reaction urea + 2 H2O + H(+) = hydrogencarbonate + 2 NH4(+). It functions in the pathway nitrogen metabolism; urea degradation; CO(2) and NH(3) from urea (urease route): step 1/1. This Burkholderia orbicola (strain MC0-3) protein is Urease subunit gamma.